We begin with the raw amino-acid sequence, 137 residues long: Small heat shock protein IbpA (137 aa).

In terms of domain architecture, sHSP spans 28–137 (TQSNGGYPPY…AMKPRRIEIK (110 aa)).

Belongs to the small heat shock protein (HSP20) family. In terms of assembly, monomer. Forms homomultimers of about 100-150 subunits at optimal growth temperatures. Conformation changes to monomers at high temperatures or high ionic concentrations.

The protein localises to the cytoplasm. Its function is as follows. Associates with aggregated proteins, together with IbpB, to stabilize and protect them from irreversible denaturation and extensive proteolysis during heat shock and oxidative stress. Aggregated proteins bound to the IbpAB complex are more efficiently refolded and reactivated by the ATP-dependent chaperone systems ClpB and DnaK/DnaJ/GrpE. Its activity is ATP-independent. This Pectobacterium atrosepticum (strain SCRI 1043 / ATCC BAA-672) (Erwinia carotovora subsp. atroseptica) protein is Small heat shock protein IbpA.